A 102-amino-acid polypeptide reads, in one-letter code: Putative UPF0320 protein YMR326C (102 aa).

The protein belongs to the UPF0320 family.

In Saccharomyces cerevisiae (strain ATCC 204508 / S288c) (Baker's yeast), this protein is Putative UPF0320 protein YMR326C.